The following is a 511-amino-acid chain: Bifunctional purine biosynthesis protein PurH (511 aa).

The MGS-like domain maps to 1 to 145; it reads MKKRALVSVS…KNHKFVSVIV (145 aa).

It belongs to the PurH family.

It catalyses the reaction (6R)-10-formyltetrahydrofolate + 5-amino-1-(5-phospho-beta-D-ribosyl)imidazole-4-carboxamide = 5-formamido-1-(5-phospho-D-ribosyl)imidazole-4-carboxamide + (6S)-5,6,7,8-tetrahydrofolate. It carries out the reaction IMP + H2O = 5-formamido-1-(5-phospho-D-ribosyl)imidazole-4-carboxamide. Its pathway is purine metabolism; IMP biosynthesis via de novo pathway; 5-formamido-1-(5-phospho-D-ribosyl)imidazole-4-carboxamide from 5-amino-1-(5-phospho-D-ribosyl)imidazole-4-carboxamide (10-formyl THF route): step 1/1. It functions in the pathway purine metabolism; IMP biosynthesis via de novo pathway; IMP from 5-formamido-1-(5-phospho-D-ribosyl)imidazole-4-carboxamide: step 1/1. The polypeptide is Bifunctional purine biosynthesis protein PurH (Bacillus cereus (strain 03BB102)).